The chain runs to 189 residues: Small ribosomal subunit protein uS7 (189 aa).

The protein belongs to the universal ribosomal protein uS7 family. As to quaternary structure, part of the 30S ribosomal subunit.

Its function is as follows. One of the primary rRNA binding proteins, it binds directly to 16S rRNA where it nucleates assembly of the head domain of the 30S subunit. Is located at the subunit interface close to the decoding center. The sequence is that of Small ribosomal subunit protein uS7 from Methanosarcina mazei (strain ATCC BAA-159 / DSM 3647 / Goe1 / Go1 / JCM 11833 / OCM 88) (Methanosarcina frisia).